A 207-amino-acid polypeptide reads, in one-letter code: MEGDSRAATASQYQPACPTRDACVYSSCYCEENIWKLCEYIKTHNQYLLEECYAVFISNEKKMVPIWKQQARPENGPVIWDYHVVLLHVSREGQSFIYDLDTILPFPCPFDIYIEDALKSDDDIHPQFRRKFRVVRADSYLKNFASDRSHMKDSSGNWREPPPEYPCIETGDSKMNLNDFISMDPAVGWGAVYTLSEFVHRFSSKNY.

Catalysis depends on residues C30, H83, and D99.

This sequence belongs to the NTAQ1 family. Monomer.

It localises to the cytoplasm. It is found in the cytosol. The protein localises to the nucleus. It catalyses the reaction N-terminal L-glutaminyl-[protein] + H2O = N-terminal L-glutamyl-[protein] + NH4(+). Its function is as follows. Mediates the side-chain deamidation of N-terminal glutamine residues to glutamate, an important step in N-end rule pathway of protein degradation. Conversion of the resulting N-terminal glutamine to glutamate renders the protein susceptible to arginylation, polyubiquitination and degradation as specified by the N-end rule. Does not act on substrates with internal or C-terminal glutamine and does not act on non-glutamine residues in any position. Does not deaminate acetylated N-terminal glutamine. With the exception of proline, all tested second-position residues on substrate peptides do not greatly influence the activity. In contrast, a proline at position 2, virtually abolishes deamidation of N-terminal glutamine. This chain is Protein N-terminal glutamine amidohydrolase (Ntaq1), found in Rattus norvegicus (Rat).